The primary structure comprises 297 residues: Phosphoribosylaminoimidazole-succinocarboxamide synthase (297 aa).

It belongs to the SAICAR synthetase family.

The enzyme catalyses 5-amino-1-(5-phospho-D-ribosyl)imidazole-4-carboxylate + L-aspartate + ATP = (2S)-2-[5-amino-1-(5-phospho-beta-D-ribosyl)imidazole-4-carboxamido]succinate + ADP + phosphate + 2 H(+). The protein operates within purine metabolism; IMP biosynthesis via de novo pathway; 5-amino-1-(5-phospho-D-ribosyl)imidazole-4-carboxamide from 5-amino-1-(5-phospho-D-ribosyl)imidazole-4-carboxylate: step 1/2. This Mycobacteroides abscessus (strain ATCC 19977 / DSM 44196 / CCUG 20993 / CIP 104536 / JCM 13569 / NCTC 13031 / TMC 1543 / L948) (Mycobacterium abscessus) protein is Phosphoribosylaminoimidazole-succinocarboxamide synthase.